The chain runs to 189 residues: Selenoprotein S (189 aa).

A helical membrane pass occupies residues 29–49; sequence VVLSSYGWYILLGCILIYLLI. A compositionally biased stretch (basic and acidic residues) spans 114-125; the sequence is IETWDRMKEGKS. A disordered region spans residues 114-189; the sequence is IETWDRMKEG…RRGPSSGGUG (76 aa). The span at 136–147 shows a compositional bias: low complexity; the sequence is PSPSTSTSAATK. A compositionally biased stretch (basic and acidic residues) spans 148–157; the sequence is PKQEKQERKT. Residue U188 is a non-standard amino acid, selenocysteine.

The protein belongs to the selenoprotein S family.

The protein localises to the endoplasmic reticulum membrane. The protein resides in the cytoplasm. In terms of biological role, involved in the degradation process of misfolded endoplasmic reticulum (ER) luminal proteins. Participates in the transfer of misfolded proteins from the ER to the cytosol, where they are destroyed by the proteasome in a ubiquitin-dependent manner. This is Selenoprotein S (vimp) from Xenopus tropicalis (Western clawed frog).